We begin with the raw amino-acid sequence, 134 residues long: Aspartate 1-decarboxylase (134 aa).

Catalysis depends on Ser25, which acts as the Schiff-base intermediate with substrate; via pyruvic acid. Ser25 carries the pyruvic acid (Ser) modification. Thr57 is a substrate binding site. Tyr58 functions as the Proton donor in the catalytic mechanism. 73 to 75 provides a ligand contact to substrate; it reads GAA.

The protein belongs to the PanD family. In terms of assembly, heterooctamer of four alpha and four beta subunits. Pyruvate serves as cofactor. Post-translationally, is synthesized initially as an inactive proenzyme, which is activated by self-cleavage at a specific serine bond to produce a beta-subunit with a hydroxyl group at its C-terminus and an alpha-subunit with a pyruvoyl group at its N-terminus.

The protein localises to the cytoplasm. The catalysed reaction is L-aspartate + H(+) = beta-alanine + CO2. It participates in cofactor biosynthesis; (R)-pantothenate biosynthesis; beta-alanine from L-aspartate: step 1/1. In terms of biological role, catalyzes the pyruvoyl-dependent decarboxylation of aspartate to produce beta-alanine. This chain is Aspartate 1-decarboxylase, found in Geobacter sp. (strain M21).